The sequence spans 237 residues: Purine nucleoside phosphorylase DeoD-type (237 aa).

His4 lines the a purine D-ribonucleoside pocket. Phosphate contacts are provided by residues Gly20, Arg24, Arg43, and 87-90; that span reads RVGT. A purine D-ribonucleoside contacts are provided by residues 179–181 and 203–204; these read EME and SD. Residue Asp204 is the Proton donor of the active site.

Belongs to the PNP/UDP phosphorylase family. In terms of assembly, homohexamer; trimer of homodimers.

It catalyses the reaction a purine D-ribonucleoside + phosphate = a purine nucleobase + alpha-D-ribose 1-phosphate. The catalysed reaction is a purine 2'-deoxy-D-ribonucleoside + phosphate = a purine nucleobase + 2-deoxy-alpha-D-ribose 1-phosphate. In terms of biological role, catalyzes the reversible phosphorolytic breakdown of the N-glycosidic bond in the beta-(deoxy)ribonucleoside molecules, with the formation of the corresponding free purine bases and pentose-1-phosphate. This chain is Purine nucleoside phosphorylase DeoD-type, found in Clostridium beijerinckii (strain ATCC 51743 / NCIMB 8052) (Clostridium acetobutylicum).